The following is a 391-amino-acid chain: Testis-expressed protein 9 (391 aa).

2 disordered regions span residues Met-1 to Asp-31 and Gln-65 to Tyr-85. A coiled-coil region spans residues Ile-188–Gly-351.

It localises to the cytoplasm. The protein localises to the cytoskeleton. It is found in the microtubule organizing center. The protein resides in the centrosome. Its subcellular location is the centriolar satellite. The chain is Testis-expressed protein 9 (TEX9) from Homo sapiens (Human).